Consider the following 277-residue polypeptide: ATP synthase subunit delta (277 aa).

Belongs to the ATPase delta chain family. F-type ATPases have 2 components, F(1) - the catalytic core - and F(0) - the membrane proton channel. F(1) has five subunits: alpha(3), beta(3), gamma(1), delta(1), epsilon(1). F(0) has three main subunits: a(1), b(2) and c(10-14). The alpha and beta chains form an alternating ring which encloses part of the gamma chain. F(1) is attached to F(0) by a central stalk formed by the gamma and epsilon chains, while a peripheral stalk is formed by the delta and b chains.

It is found in the cell membrane. Its function is as follows. F(1)F(0) ATP synthase produces ATP from ADP in the presence of a proton or sodium gradient. F-type ATPases consist of two structural domains, F(1) containing the extramembraneous catalytic core and F(0) containing the membrane proton channel, linked together by a central stalk and a peripheral stalk. During catalysis, ATP synthesis in the catalytic domain of F(1) is coupled via a rotary mechanism of the central stalk subunits to proton translocation. This protein is part of the stalk that links CF(0) to CF(1). It either transmits conformational changes from CF(0) to CF(1) or is implicated in proton conduction. The polypeptide is ATP synthase subunit delta (Bifidobacterium animalis subsp. lactis (strain AD011)).